The following is a 464-amino-acid chain: L-cystine uptake protein TcyP (464 aa).

10 helical membrane passes run 3–23 (TLLV…LYYM), 34–54 (VFTA…IYEP), 73–93 (YVKL…ISAF), 107–127 (GLII…GIAA), 184–204 (PTST…FIGV), 225–245 (IVMR…LALM), 263–283 (FVLA…LLIA), 347–367 (AGIY…IDPL), 371–391 (FILT…GVGG), and 395–415 (FAAL…ALVI).

The protein belongs to the dicarboxylate/amino acid:cation symporter (DAACS) (TC 2.A.23) family.

Its subcellular location is the membrane. Its function is as follows. Mediates uptake of L-cystine, the oxidized form of L-cysteine. This Bacillus thuringiensis (strain Al Hakam) protein is L-cystine uptake protein TcyP.